A 229-amino-acid polypeptide reads, in one-letter code: Large ribosomal subunit protein uL1 (229 aa).

It belongs to the universal ribosomal protein uL1 family. In terms of assembly, part of the 50S ribosomal subunit.

Its function is as follows. Binds directly to 23S rRNA. The L1 stalk is quite mobile in the ribosome, and is involved in E site tRNA release. Functionally, protein L1 is also a translational repressor protein, it controls the translation of the L11 operon by binding to its mRNA. This is Large ribosomal subunit protein uL1 from Flavobacterium psychrophilum (strain ATCC 49511 / DSM 21280 / CIP 103535 / JIP02/86).